Consider the following 391-residue polypeptide: Chalcone synthase (391 aa).

C164 is a catalytic residue.

It belongs to the thiolase-like superfamily. Chalcone/stilbene synthases family.

The enzyme catalyses (E)-4-coumaroyl-CoA + 3 malonyl-CoA + 3 H(+) = 2',4,4',6'-tetrahydroxychalcone + 3 CO2 + 4 CoA. It functions in the pathway secondary metabolite biosynthesis; flavonoid biosynthesis. The primary product of this enzyme is 4,2',4',6'-tetrahydroxychalcone (also termed naringenin-chalcone or chalcone) which can under specific conditions spontaneously isomerize into naringenin. This is Chalcone synthase (CHS) from Dianthus monspessulanus.